A 416-amino-acid chain; its full sequence is Serine hydroxymethyltransferase 1 (416 aa).

Residues Leu-121 and 125 to 127 (GHL) each bind (6S)-5,6,7,8-tetrahydrofolate. Position 229 is an N6-(pyridoxal phosphate)lysine (Lys-229). (6S)-5,6,7,8-tetrahydrofolate-binding positions include Glu-245 and 354-356 (SPF).

Belongs to the SHMT family. As to quaternary structure, homodimer. Pyridoxal 5'-phosphate serves as cofactor.

The protein resides in the cytoplasm. The catalysed reaction is (6R)-5,10-methylene-5,6,7,8-tetrahydrofolate + glycine + H2O = (6S)-5,6,7,8-tetrahydrofolate + L-serine. It participates in one-carbon metabolism; tetrahydrofolate interconversion. The protein operates within amino-acid biosynthesis; glycine biosynthesis; glycine from L-serine: step 1/1. In terms of biological role, catalyzes the reversible interconversion of serine and glycine with tetrahydrofolate (THF) serving as the one-carbon carrier. This reaction serves as the major source of one-carbon groups required for the biosynthesis of purines, thymidylate, methionine, and other important biomolecules. Also exhibits THF-independent aldolase activity toward beta-hydroxyamino acids, producing glycine and aldehydes, via a retro-aldol mechanism. This is Serine hydroxymethyltransferase 1 from Vibrio cholerae serotype O1 (strain ATCC 39315 / El Tor Inaba N16961).